A 308-amino-acid chain; its full sequence is Pantothenate kinase (308 aa).

Position 93 to 100 (93 to 100 (GSVAVGKS)) interacts with ATP.

Belongs to the prokaryotic pantothenate kinase family.

It localises to the cytoplasm. The catalysed reaction is (R)-pantothenate + ATP = (R)-4'-phosphopantothenate + ADP + H(+). It participates in cofactor biosynthesis; coenzyme A biosynthesis; CoA from (R)-pantothenate: step 1/5. This chain is Pantothenate kinase, found in Corynebacterium aurimucosum (strain ATCC 700975 / DSM 44827 / CIP 107346 / CN-1) (Corynebacterium nigricans).